Reading from the N-terminus, the 79-residue chain is Acyl carrier protein (79 aa).

Residues methionine 1–asparagine 76 form the Carrier domain. Serine 36 is subject to O-(pantetheine 4'-phosphoryl)serine.

It belongs to the acyl carrier protein (ACP) family. In terms of processing, 4'-phosphopantetheine is transferred from CoA to a specific serine of apo-ACP by AcpS. This modification is essential for activity because fatty acids are bound in thioester linkage to the sulfhydryl of the prosthetic group.

It is found in the cytoplasm. Its pathway is lipid metabolism; fatty acid biosynthesis. Functionally, carrier of the growing fatty acid chain in fatty acid biosynthesis. In Campylobacter hominis (strain ATCC BAA-381 / DSM 21671 / CCUG 45161 / LMG 19568 / NCTC 13146 / CH001A), this protein is Acyl carrier protein.